The chain runs to 565 residues: NAD-dependent malic enzyme (565 aa).

The active-site Proton donor is the Y104. Residue R157 participates in NAD(+) binding. K175 acts as the Proton acceptor in catalysis. The a divalent metal cation site is built by E246, D247, and D270. Residues D270 and N418 each contribute to the NAD(+) site.

The protein belongs to the malic enzymes family. As to quaternary structure, homotetramer. It depends on Mg(2+) as a cofactor. Requires Mn(2+) as cofactor.

The catalysed reaction is (S)-malate + NAD(+) = pyruvate + CO2 + NADH. It catalyses the reaction oxaloacetate + H(+) = pyruvate + CO2. This Erwinia tasmaniensis (strain DSM 17950 / CFBP 7177 / CIP 109463 / NCPPB 4357 / Et1/99) protein is NAD-dependent malic enzyme.